The primary structure comprises 105 residues: Cell division protein FtsB (105 aa).

Over 1–3 (MGK) the chain is Cytoplasmic. The helical transmembrane segment at 4–21 (LTLLLLVLLGWLQYSLWL) threads the bilayer. Residues 22-105 (GKNGVHDLVR…PAAPATQDNQ (84 aa)) are Periplasmic-facing. Residues 28–62 (DLVRVESDVAAQQSNNAQLKARNDQLFAEIDDLNG) adopt a coiled-coil conformation.

This sequence belongs to the FtsB family. As to quaternary structure, part of a complex composed of FtsB, FtsL and FtsQ.

It is found in the cell inner membrane. Its function is as follows. Essential cell division protein. May link together the upstream cell division proteins, which are predominantly cytoplasmic, with the downstream cell division proteins, which are predominantly periplasmic. This Sodalis glossinidius (strain morsitans) protein is Cell division protein FtsB.